Reading from the N-terminus, the 532-residue chain is Glutamate--cysteine ligase (532 aa).

Belongs to the glutamate--cysteine ligase type 1 family. Type 1 subfamily.

The enzyme catalyses L-cysteine + L-glutamate + ATP = gamma-L-glutamyl-L-cysteine + ADP + phosphate + H(+). Its pathway is sulfur metabolism; glutathione biosynthesis; glutathione from L-cysteine and L-glutamate: step 1/2. In Pseudomonas fluorescens (strain ATCC BAA-477 / NRRL B-23932 / Pf-5), this protein is Glutamate--cysteine ligase.